Reading from the N-terminus, the 460-residue chain is 3-isopropylmalate dehydratase large subunit (460 aa).

[4Fe-4S] cluster contacts are provided by Cys338, Cys398, and Cys401.

It belongs to the aconitase/IPM isomerase family. LeuC type 1 subfamily. As to quaternary structure, heterodimer of LeuC and LeuD. It depends on [4Fe-4S] cluster as a cofactor.

The enzyme catalyses (2R,3S)-3-isopropylmalate = (2S)-2-isopropylmalate. Its pathway is amino-acid biosynthesis; L-leucine biosynthesis; L-leucine from 3-methyl-2-oxobutanoate: step 2/4. Catalyzes the isomerization between 2-isopropylmalate and 3-isopropylmalate, via the formation of 2-isopropylmaleate. The chain is 3-isopropylmalate dehydratase large subunit from Streptococcus sanguinis (strain SK36).